Consider the following 29-residue polypeptide: Dermaseptin-J6 (29 aa).

The residue at position 29 (V29) is a Valine amide.

In terms of tissue distribution, expressed by the skin glands.

It is found in the secreted. Functionally, has antimicrobial activity. In Phasmahyla jandaia (Jandaia leaf frog), this protein is Dermaseptin-J6.